The chain runs to 313 residues: tRNA (guanine-N(7)-)-methyltransferase (313 aa).

Residues Glu33, Glu58, and Asp85 each coordinate S-adenosyl-L-methionine. Substrate is bound by residues Lys112, Asp144, and 177–180; that span reads TRYE.

Belongs to the class I-like SAM-binding methyltransferase superfamily. TrmB family.

The catalysed reaction is guanosine(46) in tRNA + S-adenosyl-L-methionine = N(7)-methylguanosine(46) in tRNA + S-adenosyl-L-homocysteine. The protein operates within tRNA modification; N(7)-methylguanine-tRNA biosynthesis. Its function is as follows. Catalyzes the formation of N(7)-methylguanine at position 46 (m7G46) in tRNA. This Thermotoga maritima (strain ATCC 43589 / DSM 3109 / JCM 10099 / NBRC 100826 / MSB8) protein is tRNA (guanine-N(7)-)-methyltransferase.